We begin with the raw amino-acid sequence, 100 residues long: Nucleoid-associated protein RoseRS_1534 (100 aa).

Belongs to the YbaB/EbfC family. As to quaternary structure, homodimer.

The protein resides in the cytoplasm. Its subcellular location is the nucleoid. Binds to DNA and alters its conformation. May be involved in regulation of gene expression, nucleoid organization and DNA protection. The chain is Nucleoid-associated protein RoseRS_1534 from Roseiflexus sp. (strain RS-1).